Reading from the N-terminus, the 117-residue chain is Large ribosomal subunit protein uL18 (117 aa).

This sequence belongs to the universal ribosomal protein uL18 family. As to quaternary structure, part of the 50S ribosomal subunit; part of the 5S rRNA/L5/L18/L25 subcomplex. Contacts the 5S and 23S rRNAs.

Its function is as follows. This is one of the proteins that bind and probably mediate the attachment of the 5S RNA into the large ribosomal subunit, where it forms part of the central protuberance. The protein is Large ribosomal subunit protein uL18 of Leuconostoc citreum (strain KM20).